Reading from the N-terminus, the 429-residue chain is Adenylosuccinate synthetase (429 aa).

Residues 12-18 (GDEGKGK) and 40-42 (GHT) contribute to the GTP site. Catalysis depends on aspartate 13, which acts as the Proton acceptor. Residues aspartate 13 and glycine 40 each contribute to the Mg(2+) site. IMP contacts are provided by residues 13-16 (DEGK), 38-41 (NAGH), threonine 128, arginine 142, glutamine 224, threonine 239, and arginine 303. The active-site Proton donor is the histidine 41. Position 299-305 (299-305 (VTTGRPR)) interacts with substrate. Residues arginine 305, 331–333 (LLD), and 413–415 (SVG) contribute to the GTP site.

Belongs to the adenylosuccinate synthetase family. Homodimer. The cofactor is Mg(2+).

Its subcellular location is the cytoplasm. It carries out the reaction IMP + L-aspartate + GTP = N(6)-(1,2-dicarboxyethyl)-AMP + GDP + phosphate + 2 H(+). Its pathway is purine metabolism; AMP biosynthesis via de novo pathway; AMP from IMP: step 1/2. Its function is as follows. Plays an important role in the de novo pathway of purine nucleotide biosynthesis. Catalyzes the first committed step in the biosynthesis of AMP from IMP. This Clostridioides difficile (strain 630) (Peptoclostridium difficile) protein is Adenylosuccinate synthetase.